The sequence spans 352 residues: GTPase Obg (352 aa).

The region spanning 1–159 is the Obg domain; sequence MHFLDQAKIY…MWVWLRLKLL (159 aa). Positions 160–327 constitute an OBG-type G domain; it reads ADVGLLGLPN…LLDAVLGYLP (168 aa). Residues 166 to 173, 191 to 195, 212 to 215, 279 to 282, and 308 to 310 each bind GTP; these read GLPNAGKS, FTTLV, DIPG, NKLD, and SGA. Mg(2+) is bound by residues serine 173 and threonine 193. The segment at 329-352 is disordered; it reads STSTETKGSEVEEVDEEGGEWSPI. Residues 339–352 are compositionally biased toward acidic residues; that stretch reads VEEVDEEGGEWSPI.

This sequence belongs to the TRAFAC class OBG-HflX-like GTPase superfamily. OBG GTPase family. In terms of assembly, monomer. The cofactor is Mg(2+).

The protein resides in the cytoplasm. Its function is as follows. An essential GTPase which binds GTP, GDP and possibly (p)ppGpp with moderate affinity, with high nucleotide exchange rates and a fairly low GTP hydrolysis rate. Plays a role in control of the cell cycle, stress response, ribosome biogenesis and in those bacteria that undergo differentiation, in morphogenesis control. In Erythrobacter litoralis (strain HTCC2594), this protein is GTPase Obg.